The following is a 243-amino-acid chain: 3,4-dihydroxyphthalate decarboxylase (243 aa).

The Proton donor/acceptor role is filled by E86. A divalent metal cation is bound by residues E86, H105, H107, and H173.

It belongs to the aldolase class II family. It depends on a divalent metal cation as a cofactor.

The enzyme catalyses 3,4-dihydroxyphthalate + H(+) = 3,4-dihydroxybenzoate + CO2. The protein operates within xenobiotic degradation; phthalate degradation. In terms of biological role, catalyzes the decarboxylation of 3,4-dihydroxyphthalate to protocatechuate (3,4-dihydroxybenzoate) during phthalate metabolism. In Rhodococcus jostii (strain RHA1), this protein is 3,4-dihydroxyphthalate decarboxylase.